We begin with the raw amino-acid sequence, 492 residues long: 56 kDa U1 small nuclear ribonucleoprotein component (492 aa).

A compositionally biased stretch (basic residues) spans 1-15; the sequence is MRPRRRGLAYHHTKP. Disordered regions lie at residues 1 to 35 and 300 to 371; these read MRPR…QRRK and DQFP…NKPG. Residues 18-30 show a composition bias toward polar residues; that stretch reads QLSQGHYPTTSND. Low complexity predominate over residues 310–321; sequence SNSPSSNSISSS. The span at 329–353 shows a compositional bias: polar residues; that stretch reads TSYQTQPQRHAVNKPSNVLNSSNRH.

In terms of assembly, component of the 18S U1 snRNP particle, a subcomplex of the spliceosome. Interacts with the nuclear cap-binding complex CBC1-CBC2 (yCBC). Directly contacts intronic sequences of substrate pre-RNA.

The protein resides in the nucleus. In terms of biological role, component of the U1 snRNP particle, which recognizes and binds the 5'-splice site of pre-mRNA. Together with other non-snRNP factors, U1 snRNP forms the spliceosomal commitment complex, that targets pre-mRNA to the splicing pathway. In Saccharomyces cerevisiae (strain ATCC 204508 / S288c) (Baker's yeast), this protein is 56 kDa U1 small nuclear ribonucleoprotein component (SNU56).